A 453-amino-acid polypeptide reads, in one-letter code: MHAHVILAAGQGTRMRSRLPKVLHPLLGKPMLLYALEAALALKPERLVVVVGHGGEKVVEALEGYPVEVAWQKEQLGTAHALLQAEGLLRDFPGPFLVTQGDTPLLSPRTLEALLRRVREGAGMALLTAELPDPTGYGRILREGEEVLGNVEEKDAPPEVRAIREVNAGAYAFDGFLFQALKEVRNENAAREYYLPDLVAIYRAHGRRVLAVRGVAEEALGVNTREELARVEGVLLRRLRAEWMGKGVRMILPETIYLEPSVELAPDVTLWPGAVLKGKTRIGEGCEVGPYAVLEDTVLEPGAKVLAHTVAQGAHLHPGASAGPFARLRPGAVLMEEVHVGNFVEVKNSLLHKGVKAGHLAYLGDAEVGEGTNIGAGVITANYDGKRKHKTEIGKKAFIGSNSVLVAPVRVGDRALVGAGSVITQDVPEGALAVARERQKNLEGYALRKLGEG.

A pyrophosphorylase region spans residues 1-225 (MHAHVILAAG…AEEALGVNTR (225 aa)). UDP-N-acetyl-alpha-D-glucosamine-binding positions include 7–10 (LAAG), lysine 21, glutamine 72, and 77–78 (GT). Position 102 (aspartate 102) interacts with Mg(2+). The UDP-N-acetyl-alpha-D-glucosamine site is built by glycine 138, glutamate 152, asparagine 167, and asparagine 223. Asparagine 223 contacts Mg(2+). The segment at 226–246 (EELARVEGVLLRRLRAEWMGK) is linker. An N-acetyltransferase region spans residues 247–453 (GVRMILPETI…GYALRKLGEG (207 aa)). Positions 329 and 347 each coordinate UDP-N-acetyl-alpha-D-glucosamine. Catalysis depends on histidine 359, which acts as the Proton acceptor. Positions 362 and 373 each coordinate UDP-N-acetyl-alpha-D-glucosamine. Residues alanine 376, 382–383 (NY), serine 401, alanine 419, and arginine 436 each bind acetyl-CoA.

It in the N-terminal section; belongs to the N-acetylglucosamine-1-phosphate uridyltransferase family. The protein in the C-terminal section; belongs to the transferase hexapeptide repeat family. Homotrimer. It depends on Mg(2+) as a cofactor.

It localises to the cytoplasm. It catalyses the reaction alpha-D-glucosamine 1-phosphate + acetyl-CoA = N-acetyl-alpha-D-glucosamine 1-phosphate + CoA + H(+). The enzyme catalyses N-acetyl-alpha-D-glucosamine 1-phosphate + UTP + H(+) = UDP-N-acetyl-alpha-D-glucosamine + diphosphate. Its pathway is nucleotide-sugar biosynthesis; UDP-N-acetyl-alpha-D-glucosamine biosynthesis; N-acetyl-alpha-D-glucosamine 1-phosphate from alpha-D-glucosamine 6-phosphate (route II): step 2/2. It participates in nucleotide-sugar biosynthesis; UDP-N-acetyl-alpha-D-glucosamine biosynthesis; UDP-N-acetyl-alpha-D-glucosamine from N-acetyl-alpha-D-glucosamine 1-phosphate: step 1/1. The protein operates within bacterial outer membrane biogenesis; LPS lipid A biosynthesis. In terms of biological role, catalyzes the last two sequential reactions in the de novo biosynthetic pathway for UDP-N-acetylglucosamine (UDP-GlcNAc). The C-terminal domain catalyzes the transfer of acetyl group from acetyl coenzyme A to glucosamine-1-phosphate (GlcN-1-P) to produce N-acetylglucosamine-1-phosphate (GlcNAc-1-P), which is converted into UDP-GlcNAc by the transfer of uridine 5-monophosphate (from uridine 5-triphosphate), a reaction catalyzed by the N-terminal domain. The polypeptide is Bifunctional protein GlmU (Thermus thermophilus (strain ATCC BAA-163 / DSM 7039 / HB27)).